Here is a 33-residue protein sequence, read N- to C-terminus: Natriuretic peptide NP2 (33 aa).

A disulfide bridge connects residues C10 and C26.

In terms of tissue distribution, expressed by the venom gland.

The protein localises to the secreted. Functionally, snake venom natriuretic peptide that shows an increase in perfusion pressure, urinary flow and glomerular filtration rate. Reduces total and proximal tubular transport of sodium. In the aortic ring assay, causes a relaxant effect in endothelium-intact thoracic aortic rings precontracted with phenylephrine in the presence and absence of isatin, a natriuretic receptor antagonist. This Crotalus durissus cascavella (Northeastern Brazilian rattlesnake) protein is Natriuretic peptide NP2.